The sequence spans 312 residues: tRNA uridine(34) hydroxylase (312 aa).

The 95-residue stretch at 124–218 folds into the Rhodanese domain; it reads SDPEVLLIDT…YLEEVPEQES (95 aa). Cys-178 (cysteine persulfide intermediate) is an active-site residue. The disordered stretch occupies residues 293–312; it reads AKARNQPHPIGRNYRLPSEA.

It belongs to the TrhO family.

The enzyme catalyses uridine(34) in tRNA + AH2 + O2 = 5-hydroxyuridine(34) in tRNA + A + H2O. In terms of biological role, catalyzes oxygen-dependent 5-hydroxyuridine (ho5U) modification at position 34 in tRNAs. This chain is tRNA uridine(34) hydroxylase, found in Pseudomonas syringae pv. syringae (strain B728a).